Here is a 235-residue protein sequence, read N- to C-terminus: Small ribosomal subunit protein uS3 (235 aa).

Residues 39 to 107 (IRTYIENELK…ETHLNIVEVR (69 aa)) enclose the KH type-2 domain. A disordered region spans residues 215–235 (SERRAVEGAGDGGGQRRRENA).

It belongs to the universal ribosomal protein uS3 family. Part of the 30S ribosomal subunit. Forms a tight complex with proteins S10 and S14.

Binds the lower part of the 30S subunit head. Binds mRNA in the 70S ribosome, positioning it for translation. This is Small ribosomal subunit protein uS3 from Chelativorans sp. (strain BNC1).